A 199-amino-acid polypeptide reads, in one-letter code: Probable GTP-binding protein EngB (199 aa).

In terms of domain architecture, EngB-type G spans 28–199 (DLPEVALAGR…EAWDTILAEL (172 aa)). GTP contacts are provided by residues 36–43 (GRSNVGKS), 63–67 (GKTQL), 81–84 (DVPG), 148–151 (TKAD), and 180–182 (FSS). 2 residues coordinate Mg(2+): serine 43 and threonine 65.

Belongs to the TRAFAC class TrmE-Era-EngA-EngB-Septin-like GTPase superfamily. EngB GTPase family. Mg(2+) is required as a cofactor.

In terms of biological role, necessary for normal cell division and for the maintenance of normal septation. The polypeptide is Probable GTP-binding protein EngB (Streptococcus thermophilus (strain CNRZ 1066)).